The sequence spans 287 residues: Ribonuclease HII (287 aa).

Positions 61–287 constitute an RNase H type-2 domain; sequence ALQIGVDEAG…FAPVRKALES (227 aa). A divalent metal cation is bound by residues Asp-67, Glu-68, and Asp-186.

It belongs to the RNase HII family. The cofactor is Mn(2+). Requires Mg(2+) as cofactor.

It is found in the cytoplasm. It catalyses the reaction Endonucleolytic cleavage to 5'-phosphomonoester.. Its function is as follows. Endonuclease that specifically degrades the RNA of RNA-DNA hybrids. This chain is Ribonuclease HII, found in Psychrobacter arcticus (strain DSM 17307 / VKM B-2377 / 273-4).